Reading from the N-terminus, the 262-residue chain is MHFEVHGLDRPDAKTIILSSGLGGSGSYWAPQIEALATDFRIVTYDHRGTGRTGGDVPDTGGISAMADDVLEIAARLQLDRFDFMGHALGGLIGLDIALRRPELIGKLILINAWSKADPHSGRCFDIRIELLERSGVEAFVKAQPLFLYPAVWMSENAERMAADERHGVAHFQGKANVLKRIAALRAFDIDDRLSEIRTPTLVVGTRDDLLVPYTRSVRLAEGLSAAELALSDFGAHAVNVVEPEEFNNKVLRFLRARSEVR.

This sequence belongs to the AB hydrolase superfamily. Hydrolase RutD family.

The catalysed reaction is carbamate + 2 H(+) = NH4(+) + CO2. Its function is as follows. Involved in pyrimidine catabolism. May facilitate the hydrolysis of carbamate, a reaction that can also occur spontaneously. The protein is Putative carbamate hydrolase RutD of Rhizobium rhizogenes (strain K84 / ATCC BAA-868) (Agrobacterium radiobacter).